A 220-amino-acid polypeptide reads, in one-letter code: Deoxyribose-phosphate aldolase (220 aa).

Asp-89 acts as the Proton donor/acceptor in catalysis. Lys-151 (schiff-base intermediate with acetaldehyde) is an active-site residue. Catalysis depends on Lys-180, which acts as the Proton donor/acceptor.

It belongs to the DeoC/FbaB aldolase family. DeoC type 1 subfamily.

It is found in the cytoplasm. The catalysed reaction is 2-deoxy-D-ribose 5-phosphate = D-glyceraldehyde 3-phosphate + acetaldehyde. Its pathway is carbohydrate degradation; 2-deoxy-D-ribose 1-phosphate degradation; D-glyceraldehyde 3-phosphate and acetaldehyde from 2-deoxy-alpha-D-ribose 1-phosphate: step 2/2. Its function is as follows. Catalyzes a reversible aldol reaction between acetaldehyde and D-glyceraldehyde 3-phosphate to generate 2-deoxy-D-ribose 5-phosphate. The polypeptide is Deoxyribose-phosphate aldolase (Streptococcus equi subsp. equi (strain 4047)).